Here is a 537-residue protein sequence, read N- to C-terminus: ESX-2 secretion system protein EccE2 (537 aa).

The helical transmembrane segment at 31-51 threads the bilayer; it reads ALGGQLGAVMAVVVGVALVFV.

The protein belongs to the EccE family. As to quaternary structure, could be part of the ESX-2 / type VII secretion system (T7SS), which is composed of cytosolic and membrane components.

Its subcellular location is the cell membrane. This chain is ESX-2 secretion system protein EccE2 (eccE2), found in Mycobacterium tuberculosis (strain CDC 1551 / Oshkosh).